The primary structure comprises 234 residues: Probable pectate lyase F (234 aa).

Residues 1-17 (MRSTAAVLSILLPGALA) form the signal peptide. N168 is a glycosylation site (N-linked (GlcNAc...) asparagine).

Belongs to the polysaccharide lyase 3 family. The cofactor is Ca(2+).

It localises to the secreted. It carries out the reaction Eliminative cleavage of (1-&gt;4)-alpha-D-galacturonan to give oligosaccharides with 4-deoxy-alpha-D-galact-4-enuronosyl groups at their non-reducing ends.. Pectinolytic enzyme consist of four classes of enzymes: pectin lyase, polygalacturonase, pectin methylesterase and rhamnogalacturonase. Among pectinolytic enzymes, pectin lyase is the most important in depolymerization of pectin, since it cleaves internal glycosidic bonds of highly methylated pectins. Favors pectate, the anion, over pectin, the methyl ester. This Aspergillus terreus (strain NIH 2624 / FGSC A1156) protein is Probable pectate lyase F (plyF).